The sequence spans 453 residues: Flap endonuclease 1 (453 aa).

Residues 1 to 105 (MGIKGLTGLL…SVLAKRFARR (105 aa)) are N-domain. D34 provides a ligand contact to Mg(2+). DNA-binding residues include R47 and R71. Mg(2+) contacts are provided by D87, E159, E161, D180, and D182. The I-domain stretch occupies residues 123–254 (DVDKLARRQV…KTALKLMREH (132 aa)). Position 159 (E159) interacts with DNA. DNA contacts are provided by G232 and D234. Residue D234 coordinates Mg(2+). Disordered stretches follow at residues 273-336 (EEIK…VASS) and 409-453 (RLDG…KSKN). Positions 320–333 (KSPKKKAPAKKKKV) are enriched in basic residues. Residues 406-414 (QQGRLDGFF) are interaction with PCNA. Residues 417 to 446 (KPKEPAAKDTGKGKGKATKGEKRKAEEKGS) are compositionally biased toward basic and acidic residues.

This sequence belongs to the XPG/RAD2 endonuclease family. FEN1 subfamily. As to quaternary structure, interacts with PCNA. Three molecules of FEN1 bind to one PCNA trimer with each molecule binding to one PCNA monomer. PCNA stimulates the nuclease activity without altering cleavage specificity. It depends on Mg(2+) as a cofactor. In terms of processing, phosphorylated. Phosphorylation upon DNA damage induces relocalization to the nuclear plasma.

The protein resides in the nucleus. It is found in the nucleolus. It localises to the nucleoplasm. Its subcellular location is the mitochondrion. In terms of biological role, structure-specific nuclease with 5'-flap endonuclease and 5'-3' exonuclease activities involved in DNA replication and repair. During DNA replication, cleaves the 5'-overhanging flap structure that is generated by displacement synthesis when DNA polymerase encounters the 5'-end of a downstream Okazaki fragment. It enters the flap from the 5'-end and then tracks to cleave the flap base, leaving a nick for ligation. Also involved in the long patch base excision repair (LP-BER) pathway, by cleaving within the apurinic/apyrimidinic (AP) site-terminated flap. Acts as a genome stabilization factor that prevents flaps from equilibrating into structures that lead to duplications and deletions. Also possesses 5'-3' exonuclease activity on nicked or gapped double-stranded DNA, and exhibits RNase H activity. Also involved in replication and repair of rDNA and in repairing mitochondrial DNA. The protein is Flap endonuclease 1 of Cryptococcus neoformans var. neoformans serotype D (strain B-3501A) (Filobasidiella neoformans).